Here is a 126-residue protein sequence, read N- to C-terminus: Aspartate 1-decarboxylase (126 aa).

Serine 25 acts as the Schiff-base intermediate with substrate; via pyruvic acid in catalysis. Serine 25 is subject to Pyruvic acid (Ser). Threonine 57 provides a ligand contact to substrate. The active-site Proton donor is tyrosine 58. 73–75 (GAA) serves as a coordination point for substrate.

It belongs to the PanD family. Heterooctamer of four alpha and four beta subunits. Requires pyruvate as cofactor. Is synthesized initially as an inactive proenzyme, which is activated by self-cleavage at a specific serine bond to produce a beta-subunit with a hydroxyl group at its C-terminus and an alpha-subunit with a pyruvoyl group at its N-terminus.

The protein resides in the cytoplasm. It carries out the reaction L-aspartate + H(+) = beta-alanine + CO2. Its pathway is cofactor biosynthesis; (R)-pantothenate biosynthesis; beta-alanine from L-aspartate: step 1/1. Functionally, catalyzes the pyruvoyl-dependent decarboxylation of aspartate to produce beta-alanine. In Stutzerimonas stutzeri (strain A1501) (Pseudomonas stutzeri), this protein is Aspartate 1-decarboxylase.